The following is a 230-amino-acid chain: uncharacterized protein (230 aa).

The signal sequence occupies residues 1–16 (MTCVNVCFFLFPPCHR). Helical transmembrane passes span 27–47 (VDLLIPSLCCSLAVFPSIPLI), 118–138 (LFFFFLLFFLSFSFSFSFLFF), 150–170 (FPILHFLFFFFLCVCVFLSFL), and 172–191 (SLSHLLSLAILFLPLLLRVF).

It localises to the cytoplasm. The protein resides in the nucleus membrane. This is an uncharacterized protein from Schizosaccharomyces pombe (strain 972 / ATCC 24843) (Fission yeast).